We begin with the raw amino-acid sequence, 86 residues long: Small ribosomal subunit protein uS15 (86 aa).

The protein belongs to the universal ribosomal protein uS15 family. Part of the 30S ribosomal subunit. Forms a bridge to the 50S subunit in the 70S ribosome, contacting the 23S rRNA.

In terms of biological role, one of the primary rRNA binding proteins, it binds directly to 16S rRNA where it helps nucleate assembly of the platform of the 30S subunit by binding and bridging several RNA helices of the 16S rRNA. Its function is as follows. Forms an intersubunit bridge (bridge B4) with the 23S rRNA of the 50S subunit in the ribosome. The protein is Small ribosomal subunit protein uS15 of Vesicomyosocius okutanii subsp. Calyptogena okutanii (strain HA).